The following is a 255-amino-acid chain: Syntaxin-6 (255 aa).

Serine 2 is modified (N-acetylserine). The residue at position 2 (serine 2) is a Phosphoserine. An interaction with BLTP3B region spans residues 2 to 112 (SMEDPFFVVK…KDQMSASSVQ (111 aa)). Residues 2–168 (SMEDPFFVVK…QAQQQLIVEQ (167 aa)) are required for interaction with VPS51. The Cytoplasmic segment spans residues 2–234 (SMEDPFFVVK…VSHMTSDRRQ (233 aa)). The stretch at 41–74 (EEIDWTTNELRNNLRSIEWDLEDLDETISIVEAN) forms a coiled coil. 2 positions are modified to phosphoserine: serine 129 and serine 152. Residues 163 to 225 (QLIVEQQDEQ…DNVMKKLAKV (63 aa)) enclose the t-SNARE coiled-coil homology domain. Residues 235–255 (WCAIAILFAVLLVVLTLFLVL) traverse the membrane as a helical; Anchor for type IV membrane protein segment.

Belongs to the syntaxin family. As to quaternary structure, identified in a complex containing STX6, STX12, VAMP4 and VTI1A. Binds EEA1. Interacts with VPS45A and GOPC. Interacts with MARCHF2; the interaction promotes MARCHF2-mediated ubiquitination and degradation of CFTR. Interacts with MARCHF3. Interacts with BLTP3B (via C-terminal coiled-coil domain). Interacts with BAIAP3; this interaction is increased in the presence of calcium. Interacts (via N-terminus) with VPS51. Interacts with VPS13B. Widely expressed, with relatively higher expression in brain, lung and kidney.

The protein resides in the golgi apparatus membrane. Its subcellular location is the golgi apparatus. It is found in the trans-Golgi network membrane. The protein localises to the recycling endosome membrane. Its function is as follows. SNARE promoting movement of transport vesicles to target membranes. Targets endosomes to the trans-Golgi network, and may therefore function in retrograde trafficking. Together with SNARE STX12, promotes movement of vesicles from endosomes to the cell membrane, and may therefore function in the endocytic recycling pathway. This Rattus norvegicus (Rat) protein is Syntaxin-6 (Stx6).